The chain runs to 186 residues: Protein GrpE (186 aa).

Positions 1-17 are enriched in basic and acidic residues; sequence MKDEHNQEHDLSQKELE. A disordered region spans residues 1 to 32; sequence MKDEHNQEHDLSQKELESCENSCTCEGKKQEA.

The protein belongs to the GrpE family. In terms of assembly, homodimer.

The protein localises to the cytoplasm. Functionally, participates actively in the response to hyperosmotic and heat shock by preventing the aggregation of stress-denatured proteins, in association with DnaK and GrpE. It is the nucleotide exchange factor for DnaK and may function as a thermosensor. Unfolded proteins bind initially to DnaJ; upon interaction with the DnaJ-bound protein, DnaK hydrolyzes its bound ATP, resulting in the formation of a stable complex. GrpE releases ADP from DnaK; ATP binding to DnaK triggers the release of the substrate protein, thus completing the reaction cycle. Several rounds of ATP-dependent interactions between DnaJ, DnaK and GrpE are required for fully efficient folding. This is Protein GrpE from Helicobacter acinonychis (strain Sheeba).